The following is a 386-amino-acid chain: TRIBOA-glucoside O-methyltransferase BX7 (386 aa).

S-adenosyl-L-methionine-binding residues include glycine 224, aspartate 248, methionine 270, and lysine 283. The active-site Proton acceptor is the histidine 287.

Belongs to the class I-like SAM-binding methyltransferase superfamily. Cation-independent O-methyltransferase family. COMT subfamily. In terms of tissue distribution, expressed in seedlings and newly formed crown roots. Highest expression in the scutellar node. Low to non detectable levels in cob, tassel and mature organs like husk or leaves.

It catalyses the reaction TRIBOA beta-D-glucoside + S-adenosyl-L-methionine = DIMBOA beta-D-glucoside + S-adenosyl-L-homocysteine + H(+). Functionally, O-methyltransferase involved in the benzoxazinoid glucoside biosynthesis. Can use 2,4,7-trihydroxy-2H-1,4-benzoxazin-3(4H)-one 2-D-glucoside (TRIBOA-glucoside) as substrate, but not aglucone TRIBOA, caffeic acid, ferulic acid, apigenin or quercetin. The polypeptide is TRIBOA-glucoside O-methyltransferase BX7 (BX7) (Zea mays (Maize)).